Reading from the N-terminus, the 142-residue chain is Hemoglobin subunit alpha-1 (142 aa).

A Globin domain is found at 2–142 (KLTAEDKHNV…VAYVLASKYR (141 aa)). Residue H59 participates in O2 binding. Residue H88 participates in heme b binding.

The protein belongs to the globin family. Major hemoglobin is a heterotetramer of two alpha-1 chains and two beta-1 chains. Red blood cells.

Its function is as follows. Involved in oxygen transport from the lung to the various peripheral tissues. In Pleurodeles waltl (Iberian ribbed newt), this protein is Hemoglobin subunit alpha-1.